Consider the following 146-residue polypeptide: 3-hydroxyacyl-[acyl-carrier-protein] dehydratase FabZ (146 aa).

The active site involves His48.

Belongs to the thioester dehydratase family. FabZ subfamily.

The protein resides in the cytoplasm. It catalyses the reaction a (3R)-hydroxyacyl-[ACP] = a (2E)-enoyl-[ACP] + H2O. In terms of biological role, involved in unsaturated fatty acids biosynthesis. Catalyzes the dehydration of short chain beta-hydroxyacyl-ACPs and long chain saturated and unsaturated beta-hydroxyacyl-ACPs. This is 3-hydroxyacyl-[acyl-carrier-protein] dehydratase FabZ from Teredinibacter turnerae (strain ATCC 39867 / T7901).